Consider the following 463-residue polypeptide: ATP synthase subunit beta (463 aa).

152 to 159 (GGAGVGKT) contributes to the ATP binding site.

Belongs to the ATPase alpha/beta chains family. As to quaternary structure, F-type ATPases have 2 components, CF(1) - the catalytic core - and CF(0) - the membrane proton channel. CF(1) has five subunits: alpha(3), beta(3), gamma(1), delta(1), epsilon(1). CF(0) has three main subunits: a(1), b(2) and c(9-12). The alpha and beta chains form an alternating ring which encloses part of the gamma chain. CF(1) is attached to CF(0) by a central stalk formed by the gamma and epsilon chains, while a peripheral stalk is formed by the delta and b chains.

The protein resides in the cell inner membrane. The catalysed reaction is ATP + H2O + 4 H(+)(in) = ADP + phosphate + 5 H(+)(out). Its function is as follows. Produces ATP from ADP in the presence of a proton gradient across the membrane. The catalytic sites are hosted primarily by the beta subunits. This is ATP synthase subunit beta from Shewanella denitrificans (strain OS217 / ATCC BAA-1090 / DSM 15013).